The primary structure comprises 250 residues: Small ribosomal subunit protein uS2 (250 aa).

Residues 226-250 are disordered; the sequence is DQQNRQELGEDLGAAVEPAAEEALA. Residues 239–250 are compositionally biased toward low complexity; the sequence is AAVEPAAEEALA.

It belongs to the universal ribosomal protein uS2 family.

This is Small ribosomal subunit protein uS2 (rpsB) from Zymomonas mobilis subsp. mobilis (strain ATCC 31821 / ZM4 / CP4).